The primary structure comprises 305 residues: uncharacterized protein (305 aa).

Belongs to the ADP-ribosylglycohydrolase family.

This is an uncharacterized protein from Archaeoglobus fulgidus (strain ATCC 49558 / DSM 4304 / JCM 9628 / NBRC 100126 / VC-16).